The chain runs to 416 residues: Adenylosuccinate synthetase (416 aa).

GTP contacts are provided by residues 12–18 (GDEGKGK) and 40–42 (GHT). Aspartate 13 functions as the Proton acceptor in the catalytic mechanism. Mg(2+) contacts are provided by aspartate 13 and glycine 40. Residues 13 to 16 (DEGK), 38 to 41 (NAGH), threonine 125, arginine 139, glutamine 219, threonine 234, and arginine 298 each bind IMP. The Proton donor role is filled by histidine 41. 294-300 (TVTGRKR) contributes to the substrate binding site. GTP is bound by residues arginine 300, 326 to 328 (KLD), and 404 to 406 (STS).

Belongs to the adenylosuccinate synthetase family. As to quaternary structure, homodimer. Mg(2+) serves as cofactor.

It localises to the cytoplasm. The catalysed reaction is IMP + L-aspartate + GTP = N(6)-(1,2-dicarboxyethyl)-AMP + GDP + phosphate + 2 H(+). It functions in the pathway purine metabolism; AMP biosynthesis via de novo pathway; AMP from IMP: step 1/2. Plays an important role in the de novo pathway of purine nucleotide biosynthesis. Catalyzes the first committed step in the biosynthesis of AMP from IMP. The polypeptide is Adenylosuccinate synthetase (Aliarcobacter butzleri (strain RM4018) (Arcobacter butzleri)).